The sequence spans 880 residues: Alanine--tRNA ligase (880 aa).

4 residues coordinate Zn(2+): H571, H575, C673, and H677.

Belongs to the class-II aminoacyl-tRNA synthetase family. Requires Zn(2+) as cofactor.

It is found in the cytoplasm. It catalyses the reaction tRNA(Ala) + L-alanine + ATP = L-alanyl-tRNA(Ala) + AMP + diphosphate. In terms of biological role, catalyzes the attachment of alanine to tRNA(Ala) in a two-step reaction: alanine is first activated by ATP to form Ala-AMP and then transferred to the acceptor end of tRNA(Ala). Also edits incorrectly charged Ser-tRNA(Ala) and Gly-tRNA(Ala) via its editing domain. The sequence is that of Alanine--tRNA ligase from Oleidesulfovibrio alaskensis (strain ATCC BAA-1058 / DSM 17464 / G20) (Desulfovibrio alaskensis).